We begin with the raw amino-acid sequence, 358 residues long: DnaJ homolog subfamily B member 11 (358 aa).

Positions 1 to 22 (MAPQNLSTFCLLLLYLIGAVIA) are cleaved as a signal peptide. One can recognise a J domain in the interval 25–90 (DFYKILGVPR…EKRKQYDTYG (66 aa)). Thr-188 is modified (phosphothreonine). A glycan (N-linked (GlcNAc...) asparagine) is linked at Asn-261.

As to quaternary structure, part of a large chaperone multiprotein complex comprising DNAJB11, HSP90B1, HSPA5, HYOU, PDIA2, PDIA4, PDIA6, PPIB, SDF2L1, UGGT1 and very small amounts of ERP29, but not, or at very low levels, CALR nor CANX. Binds to denatured substrates in an ATP-independent manner. Interacts via the J domain with HSPA5 in an ATP-dependent manner. Contains high-mannose Endo H-sensitive carbohydrates. In terms of processing, cys-169, Cys-171, Cys-193 and Cys-196 form intramolecular disulfide bonds. The preferential partner for each Cys is not known. Post-translationally, thr-188 was reported to be phosphorylated upon DNA damage by ATM or ATR; however as this position has been shown to be in the ER lumen, the in vivo relevance is not proven. In terms of tissue distribution, widely expressed.

It localises to the endoplasmic reticulum lumen. Its function is as follows. As a co-chaperone for HSPA5 it is required for proper folding, trafficking or degradation of proteins. Binds directly to both unfolded proteins that are substrates for ERAD and nascent unfolded peptide chains, but dissociates from the HSPA5-unfolded protein complex before folding is completed. May help recruiting HSPA5 and other chaperones to the substrate. Stimulates HSPA5 ATPase activity. It is necessary for maturation and correct trafficking of PKD1. In Homo sapiens (Human), this protein is DnaJ homolog subfamily B member 11 (DNAJB11).